The chain runs to 182 residues: Thioredoxin F-type, chloroplastic (182 aa).

Positions 1 to 22 are disordered; that stretch reads MPLSLRLAPSPTALSPTTGGFS. Positions 52–177 constitute a Thioredoxin domain; it reads KRGDSSVVRC…LVAAIETARS (126 aa). Catalysis depends on nucleophile residues Cys-102 and Cys-105. Cysteines 102 and 105 form a disulfide.

The protein belongs to the thioredoxin family. Plant F-type subfamily. Forms a complex with heterodimeric ferredoxin-thioredoxin reductase (FTR) and ferredoxin.

It is found in the plastid. Its subcellular location is the chloroplast. Participates in various redox reactions through the reversible oxidation of the active center dithiol to a disulfide. The F form is known to activate a number of enzymes of the photosynthetic carbon cycle. The polypeptide is Thioredoxin F-type, chloroplastic (TRXF) (Brassica napus (Rape)).